Reading from the N-terminus, the 69-residue chain is MNKDEAGGNWKQFKGKVKEQWGKLTDDDMTIIEGKRDQLVGKIQERYGYQKDQAEKEVDSWEKRHDYRW.

This sequence belongs to the UPF0337 (CsbD) family.

The polypeptide is UPF0337 protein YjbJ (yjbJ) (Escherichia coli O6:H1 (strain CFT073 / ATCC 700928 / UPEC)).